We begin with the raw amino-acid sequence, 326 residues long: tRNA-modifying protein YgfZ (326 aa).

The folate site is built by tryptophan 27 and tryptophan 189.

Belongs to the tRNA-modifying YgfZ family.

The protein localises to the cytoplasm. Functionally, folate-binding protein involved in regulating the level of ATP-DnaA and in the modification of some tRNAs. It is probably a key factor in regulatory networks that act via tRNA modification, such as initiation of chromosomal replication. This Escherichia coli (strain SE11) protein is tRNA-modifying protein YgfZ.